An 806-amino-acid chain; its full sequence is Glycerol-3-phosphate acyltransferase (806 aa).

The short motif at 305 to 310 (CHRSHM) is the HXXXXD motif element.

Belongs to the GPAT/DAPAT family.

It localises to the cell inner membrane. It catalyses the reaction sn-glycerol 3-phosphate + an acyl-CoA = a 1-acyl-sn-glycero-3-phosphate + CoA. The protein operates within phospholipid metabolism; CDP-diacylglycerol biosynthesis; CDP-diacylglycerol from sn-glycerol 3-phosphate: step 1/3. The sequence is that of Glycerol-3-phosphate acyltransferase from Escherichia fergusonii (strain ATCC 35469 / DSM 13698 / CCUG 18766 / IAM 14443 / JCM 21226 / LMG 7866 / NBRC 102419 / NCTC 12128 / CDC 0568-73).